A 314-amino-acid chain; its full sequence is Epithelial cell adhesion molecule (314 aa).

An N-terminal signal peptide occupies residues 1 to 23 (MAPPQVLAFGLLLAAATATFAAA). Over 24–265 (QEECVCENYK…APEFSMQGLK (242 aa)) the chain is Extracellular. Disulfide bonds link C27–C46, C29–C59, C38–C48, C66–C99, C110–C116, and C118–C135. One can recognise a Thyroglobulin type-1 domain in the interval 63–135 (AAKCLVMKAE…RTDKDTEITC (73 aa)). N74 carries N-linked (GlcNAc...) asparagine; partial glycosylation. N111 is a glycosylation site (N-linked (GlcNAc...) asparagine). The N-linked (GlcNAc...) asparagine glycan is linked to N198. A helical membrane pass occupies residues 266-288 (AGVIAVIVVVVIAVVAGIVVLVI). The Cytoplasmic segment spans residues 289–314 (SRKKRMAKYEKAEIKEMGEMHRELNA).

The protein belongs to the EPCAM family. Monomer. Interacts with phosphorylated CLDN7. In terms of processing, hyperglycosylated in carcinoma tissue as compared with autologous normal epithelia. Glycosylation at Asn-198 is crucial for protein stability. In terms of tissue distribution, highly and selectively expressed by undifferentiated rather than differentiated embryonic stem cells (ESC). Levels rapidly diminish as soon as ESC's differentiate (at protein levels). Expressed in almost all epithelial cell membranes but not on mesodermal or neural cell membranes. Found on the surface of adenocarcinoma.

It is found in the lateral cell membrane. The protein localises to the cell junction. Its subcellular location is the tight junction. In terms of biological role, may act as a physical homophilic interaction molecule between intestinal epithelial cells (IECs) and intraepithelial lymphocytes (IELs) at the mucosal epithelium for providing immunological barrier as a first line of defense against mucosal infection. Plays a role in embryonic stem cells proliferation and differentiation. Up-regulates the expression of FABP5, MYC and cyclins A and E. The polypeptide is Epithelial cell adhesion molecule (EPCAM) (Homo sapiens (Human)).